A 910-amino-acid chain; its full sequence is p53-induced death domain-containing protein 1 (910 aa).

The segment at 1–25 (MAATVEGPELEAAAAAGDASEDSDA) is disordered. Position 2 is an N-acetylalanine (Ala2). LRR repeat units follow at residues 126 to 147 (HLAHLDLSFNSLETLPACVLQM), 149 to 171 (GLGALLLSHNCLSELPEALGALP), 172 to 194 (ALTFLTVTHNRLQTLPPALGALS), 195 to 216 (TLQRLDLSQNLLDTLPPEIGGL), 218 to 240 (SLLELNLASNRLQSLPASLAGLR), 241 to 263 (SLRLLVLHSNLLASVPADLARLP), and 264 to 285 (LLTRLDLRDNQLRDLPPELLDA). Residues Ser299 and Ser305 each carry the phosphoserine modification. 2 consecutive ZU5 domains span residues 322–454 (DLDS…VSRP) and 455–596 (VSNA…WYTT). 2 peptidase S68 regions span residues 423-452 (DLETYLEEEAPQRLWAHCQVPHFSWFLVVS) and 566-594 (DITAQVVLELTHLYARFQVTHFSWYWLWY). Residues His444, Ser446, His586, and Ser588 contribute to the active site. The tract at residues 580–716 (ARFQVTHFSW…TTTLDREAQA (137 aa)) is UPA domain. A Death domain is found at 788-873 (TQSNLLSVAG…DVAEEVRAVL (86 aa)). A disordered region spans residues 884 to 910 (IRRMGLAPKDPALPGSSAPQPPEPAQA).

As to quaternary structure, forms a complex named the PIDDosome with CASP2 and CRADD. Forms a complex with IKBKG and RIPK1. Interacts with FADD and MADD. Post-translationally, undergoes autoproteolytic processing whose extent either directs cells towards survival or apoptotic pathways. Autoproteolytically cleaved into two main fragments PIDD-N and PIDD-C. PIDD-C can be further processed into PIDD-CC, a processing which is enhanced by DNA damage. The cleavage producing PIDD-C is required for translocation of PIDD1 to the nucleus upon DNA damage and activation of NF-kappa-B. PIDD-CC mediates the interaction with CRADD and the cleavage producing PIDD-CC is required for the activation of CASP2. PIDD-N remains associated with PIDD-C and PIDD-CC after cleavage. In terms of tissue distribution, ubiquitous.

The protein resides in the cytoplasm. It localises to the nucleus. Functionally, component of the DNA damage/stress response pathway that functions downstream of p53/TP53 and can either promote cell survival or apoptosis. Associated with CRADD and the CASP2 caspase, it forms the PIDDosome a complex that activates CASP2 and triggers apoptosis. Associated with IKBKG and RIPK1, it enhances sumoylation and ubiquitination of IKBKG which is important for activation of the transcription factor NF-kappa-B. This chain is p53-induced death domain-containing protein 1, found in Homo sapiens (Human).